The following is a 125-amino-acid chain: Small ribosomal subunit protein eS6 (125 aa).

Belongs to the eukaryotic ribosomal protein eS6 family.

The protein is Small ribosomal subunit protein eS6 of Thermococcus onnurineus (strain NA1).